Consider the following 357-residue polypeptide: MSLENFGNFLTLDEKHSFIKKYFKEFYTKDFKLFASKDKHYRTRAELSFYHENDTLFYAMFDPKSKKKYIIEYLDFADEKICAFMPRLLEYLRQDNKLKEKLFGVEFLTTKQELSITLLYHKNIEDIKSNLENLSNILHINLIARSKGKKLIFKTENLRQTLNIQDRKIFYEFNNDCFIQPNTAINEKMITWVCEILNTQKRMDLLELYCGYGNFTLALAPFFFKILATEISKSNINFALKNCELNNTTNIHFARLSSEELSLAIKKEREFFRLKDIRLDDFNFSHVLVDPPRAGLDKSVIDLIKKYGNIIYISCNPMTLKENLKELSLTHRVEEFALFDQFVNTPHLECGVFLSKV.

Residues glutamine 180, tyrosine 209, asparagine 214, glutamate 230, and aspartate 290 each contribute to the S-adenosyl-L-methionine site. The active-site Nucleophile is cysteine 315. The active-site Proton acceptor is the glutamate 349.

It belongs to the class I-like SAM-binding methyltransferase superfamily. RNA M5U methyltransferase family. TrmA subfamily.

The enzyme catalyses uridine(54) in tRNA + S-adenosyl-L-methionine = 5-methyluridine(54) in tRNA + S-adenosyl-L-homocysteine + H(+). It carries out the reaction uridine(341) in tmRNA + S-adenosyl-L-methionine = 5-methyluridine(341) in tmRNA + S-adenosyl-L-homocysteine + H(+). Dual-specificity methyltransferase that catalyzes the formation of 5-methyluridine at position 54 (m5U54) in all tRNAs, and that of position 341 (m5U341) in tmRNA (transfer-mRNA). The sequence is that of tRNA/tmRNA (uracil-C(5))-methyltransferase from Campylobacter jejuni subsp. jejuni serotype O:2 (strain ATCC 700819 / NCTC 11168).